The following is an 833-amino-acid chain: Leucine--tRNA ligase (833 aa).

The short motif at 41-52 is the 'HIGH' region element; the sequence is PYPSGAGLHVGH. A 'KMSKS' region motif is present at residues 610-614; sequence KMSKS. An ATP-binding site is contributed by Lys-613.

The protein belongs to the class-I aminoacyl-tRNA synthetase family.

The protein localises to the cytoplasm. It carries out the reaction tRNA(Leu) + L-leucine + ATP = L-leucyl-tRNA(Leu) + AMP + diphosphate. The protein is Leucine--tRNA ligase of Streptococcus pyogenes serotype M1.